The following is a 496-amino-acid chain: Glutamate--tRNA ligase 2 (496 aa).

A 'HIGH' region motif is present at residues 13–23 (PSPTGRLHVGG). A 'KMSKS' region motif is present at residues 255 to 259 (KLSKR). Lys258 contacts ATP.

It belongs to the class-I aminoacyl-tRNA synthetase family. Glutamate--tRNA ligase type 1 subfamily. As to quaternary structure, monomer.

It is found in the cytoplasm. It catalyses the reaction tRNA(Glu) + L-glutamate + ATP = L-glutamyl-tRNA(Glu) + AMP + diphosphate. In terms of biological role, catalyzes the attachment of glutamate to tRNA(Glu) in a two-step reaction: glutamate is first activated by ATP to form Glu-AMP and then transferred to the acceptor end of tRNA(Glu). This is Glutamate--tRNA ligase 2 from Rubrobacter xylanophilus (strain DSM 9941 / JCM 11954 / NBRC 16129 / PRD-1).